The chain runs to 430 residues: Tol-Pal system protein TolB (430 aa).

Residues 1–21 (MKQAFRVALGFLVLWASVLHA) form the signal peptide.

It belongs to the TolB family. As to quaternary structure, the Tol-Pal system is composed of five core proteins: the inner membrane proteins TolA, TolQ and TolR, the periplasmic protein TolB and the outer membrane protein Pal. They form a network linking the inner and outer membranes and the peptidoglycan layer.

The protein resides in the periplasm. Functionally, part of the Tol-Pal system, which plays a role in outer membrane invagination during cell division and is important for maintaining outer membrane integrity. TolB occupies a key intermediary position in the Tol-Pal system because it communicates directly with both membrane-embedded components, Pal in the outer membrane and TolA in the inner membrane. This is Tol-Pal system protein TolB from Yersinia pestis.